The chain runs to 367 residues: tRNA (cytosine(34)-C(5))-methyltransferase, mitochondrial (367 aa).

S-adenosyl-L-methionine is bound by residues 170–176 (CAAPGGK), glutamate 193, aspartate 224, and aspartate 242. Cysteine 296 functions as the Nucleophile in the catalytic mechanism.

This sequence belongs to the class I-like SAM-binding methyltransferase superfamily. RsmB/NOP family.

The protein localises to the mitochondrion matrix. It catalyses the reaction cytidine(34) in mitochondrial tRNA + S-adenosyl-L-methionine = 5-methylcytidine(34) in mitochondrial tRNA + S-adenosyl-L-homocysteine + H(+). In terms of biological role, mitochondrial tRNA methyltransferase that mediates methylation of cytosine to 5-methylcytosine (m5C) at position 34 of mt-tRNA(Met). mt-tRNA(Met) methylation at cytosine(34) takes place at the wobble position of the anticodon and initiates the formation of 5-formylcytosine (f(5)c) at this position. mt-tRNA(Met) containing the f(5)c modification at the wobble position enables recognition of the AUA codon in addition to the AUG codon, expanding codon recognition in mitochondrial translation. The polypeptide is tRNA (cytosine(34)-C(5))-methyltransferase, mitochondrial (Danio rerio (Zebrafish)).